The chain runs to 119 residues: Short coiled-coil protein A (119 aa).

A compositionally biased stretch (acidic residues) spans 1-10 (MEGDVDEDDG). Residues 1–26 (MEGDVDEDDGTFTNISLADDSADGEP) form a disordered region. The stretch at 48-95 (MENQVEQEEKTRLINQVLELQHTLEDLSARVDAVKEENLKLKSENQVL) forms a coiled coil.

This sequence belongs to the SCOC family.

The protein resides in the golgi apparatus membrane. It is found in the golgi apparatus. The protein localises to the trans-Golgi network. Its subcellular location is the cytoplasm. It localises to the cytosol. Positive regulator of amino acid starvation-induced autophagy. This chain is Short coiled-coil protein A (scoca), found in Danio rerio (Zebrafish).